We begin with the raw amino-acid sequence, 228 residues long: Uracil-DNA glycosylase (228 aa).

D71 (proton acceptor) is an active-site residue.

Belongs to the uracil-DNA glycosylase (UDG) superfamily. UNG family.

The protein localises to the cytoplasm. It carries out the reaction Hydrolyzes single-stranded DNA or mismatched double-stranded DNA and polynucleotides, releasing free uracil.. Its function is as follows. Excises uracil residues from the DNA which can arise as a result of misincorporation of dUMP residues by DNA polymerase or due to deamination of cytosine. This chain is Uracil-DNA glycosylase, found in Thermobifida fusca (strain YX).